A 186-amino-acid chain; its full sequence is Ribosome-recycling factor (186 aa).

This sequence belongs to the RRF family.

Its subcellular location is the cytoplasm. Responsible for the release of ribosomes from messenger RNA at the termination of protein biosynthesis. May increase the efficiency of translation by recycling ribosomes from one round of translation to another. The protein is Ribosome-recycling factor of Allorhizobium ampelinum (strain ATCC BAA-846 / DSM 112012 / S4) (Agrobacterium vitis (strain S4)).